A 154-amino-acid chain; its full sequence is 6,7-dimethyl-8-ribityllumazine synthase (154 aa).

5-amino-6-(D-ribitylamino)uracil-binding positions include Phe23, 57–59, and 81–83; these read AFE and AII. (2S)-2-hydroxy-3-oxobutyl phosphate is bound at residue 86–87; sequence ST. The active-site Proton donor is the His89. Residue Phe114 participates in 5-amino-6-(D-ribitylamino)uracil binding. Arg128 contacts (2S)-2-hydroxy-3-oxobutyl phosphate.

Belongs to the DMRL synthase family.

The catalysed reaction is (2S)-2-hydroxy-3-oxobutyl phosphate + 5-amino-6-(D-ribitylamino)uracil = 6,7-dimethyl-8-(1-D-ribityl)lumazine + phosphate + 2 H2O + H(+). The protein operates within cofactor biosynthesis; riboflavin biosynthesis; riboflavin from 2-hydroxy-3-oxobutyl phosphate and 5-amino-6-(D-ribitylamino)uracil: step 1/2. Its function is as follows. Catalyzes the formation of 6,7-dimethyl-8-ribityllumazine by condensation of 5-amino-6-(D-ribitylamino)uracil with 3,4-dihydroxy-2-butanone 4-phosphate. This is the penultimate step in the biosynthesis of riboflavin. This is 6,7-dimethyl-8-ribityllumazine synthase from Nitratiruptor sp. (strain SB155-2).